Here is a 934-residue protein sequence, read N- to C-terminus: Bifunctional uridylyltransferase/uridylyl-removing enzyme (934 aa).

Positions 1-379 are uridylyltransferase; sequence MSAHDLKLEE…TFSRRKRKLS (379 aa). Residues 380 to 736 are uridylyl-removing; sequence DDGAFISENH…AKPHAFEAVT (357 aa). The region spanning 496–613 is the HD domain; it reads VDEHLLRCIA…IDFADTVQTM (118 aa). 2 consecutive ACT domains span residues 737–818 and 848–931; these read EITV…DMLA and VIEV…RSPQ.

It belongs to the GlnD family. Mg(2+) is required as a cofactor.

The catalysed reaction is [protein-PII]-L-tyrosine + UTP = [protein-PII]-uridylyl-L-tyrosine + diphosphate. The enzyme catalyses [protein-PII]-uridylyl-L-tyrosine + H2O = [protein-PII]-L-tyrosine + UMP + H(+). With respect to regulation, uridylyltransferase (UTase) activity is inhibited by glutamine, while glutamine activates uridylyl-removing (UR) activity. In terms of biological role, modifies, by uridylylation and deuridylylation, the PII regulatory proteins (GlnB and homologs), in response to the nitrogen status of the cell that GlnD senses through the glutamine level. Under low glutamine levels, catalyzes the conversion of the PII proteins and UTP to PII-UMP and PPi, while under higher glutamine levels, GlnD hydrolyzes PII-UMP to PII and UMP (deuridylylation). Thus, controls uridylylation state and activity of the PII proteins, and plays an important role in the regulation of nitrogen assimilation and metabolism. This is Bifunctional uridylyltransferase/uridylyl-removing enzyme from Brucella ovis (strain ATCC 25840 / 63/290 / NCTC 10512).